A 345-amino-acid polypeptide reads, in one-letter code: Sesquiterpene synthase PILCRDRAFT_825684 (345 aa).

Mg(2+) contacts are provided by Asp91, Asn226, Ser230, and Glu234. The short motif at 91–95 (DELTD) is the DDXXD motif element. Residues Arg316 and Tyr317 each contribute to the (2E,6E)-farnesyl diphosphate site.

It belongs to the terpene synthase family. Mg(2+) serves as cofactor.

It carries out the reaction (2E,6E)-farnesyl diphosphate = viridiflorene + diphosphate. Terpene cyclase that catalyzes the cyclization of farnesyl diphosphate (FPP) to various sesquiterpenes, including beta-elemene, viridiflorene and gamma-cadinene. Gamma-cadinene is the major product of PILCRDRAFT_825684. The sequence is that of Sesquiterpene synthase PILCRDRAFT_825684 from Piloderma croceum (strain F 1598).